Reading from the N-terminus, the 115-residue chain is MHELSIARSIVELVEEQADNRGASVVEELELEIGHLSGVEIQTLEFALDSAIKGSKLEKARIIRHYIEGEGQCSDCETIFPMNALFSPCPHCGSYLVKILKGKELRVKSIVIKKE.

Histidine 2 provides a ligand contact to Ni(2+). Residues cysteine 73, cysteine 76, cysteine 89, and cysteine 92 each contribute to the Zn(2+) site.

It belongs to the HypA/HybF family.

Functionally, involved in the maturation of [NiFe] hydrogenases. Required for nickel insertion into the metal center of the hydrogenase. This is Hydrogenase maturation factor HypA from Parabacteroides distasonis (strain ATCC 8503 / DSM 20701 / CIP 104284 / JCM 5825 / NCTC 11152).